A 144-amino-acid polypeptide reads, in one-letter code: Maximins 11/H11 (144 aa).

The first 18 residues, Met-1–Ala-18, serve as a signal peptide directing secretion. Residues Arg-19–Arg-43 constitute a propeptide that is removed on maturation. At Asn-70 the chain carries Asparagine amide. A propeptide spanning residues Thr-74–Arg-123 is cleaved from the precursor. Ile-143 is modified (isoleucine amide).

This sequence belongs to the bombinin family. In terms of tissue distribution, expressed by the skin glands.

It is found in the secreted. Functionally, maximin-11 shows antimicrobial activity against bacteria and against the fungus C.albicans. It has little hemolytic activity. Maximin-H11 shows antimicrobial activity against bacteria and against the fungus C.albicans. Shows strong hemolytic activity. The polypeptide is Maximins 11/H11 (Bombina maxima (Giant fire-bellied toad)).